Here is an 851-residue protein sequence, read N- to C-terminus: DNA mismatch repair protein MutS (851 aa).

Residue 602–609 (GPNMSGKS) participates in ATP binding.

This sequence belongs to the DNA mismatch repair MutS family.

Its function is as follows. This protein is involved in the repair of mismatches in DNA. It is possible that it carries out the mismatch recognition step. This protein has a weak ATPase activity. The chain is DNA mismatch repair protein MutS from Streptococcus pyogenes serotype M12 (strain MGAS2096).